A 929-amino-acid chain; its full sequence is SED5-binding protein 3 (929 aa).

Ser15 bears the Phosphoserine mark. Polar residues predominate over residues 18–28 (ESTVHTGGASS). Residues 18 to 52 (ESTVHTGGASSKKSRRPHRAYHNFSSGTVPTLGNS) are disordered. Residues 29–38 (KKSRRPHRAY) are compositionally biased toward basic residues. Residues 40–52 (NFSSGTVPTLGNS) show a composition bias toward polar residues. A Phosphothreonine modification is found at Thr72. Residues Ser83, Ser85, Ser94, Ser101, and Ser110 each carry the phosphoserine modification. Phosphothreonine is present on Thr216. The segment at 220 to 244 (CRRCRAYANPKFQFTYDSSVICNIC) is zinc finger-like.

Belongs to the SEC23/SEC24 family. SEC24 subfamily. As to quaternary structure, COPII is composed of at least five proteins: the SEC23/24 complex, the SEC13/31 complex and SAR1. Binds to SED5. Interacts with GHR1.

The protein localises to the cytoplasm. It is found in the golgi apparatus membrane. Its subcellular location is the endoplasmic reticulum membrane. Its function is as follows. Component of the COPII coat, that covers ER-derived vesicles involved in transport from the endoplasmic reticulum to the Golgi apparatus. COPII acts in the cytoplasm to promote the transport of secretory, plasma membrane, and vacuolar proteins from the endoplasmic reticulum to the Golgi complex. This is SED5-binding protein 3 (SFB3) from Saccharomyces cerevisiae (strain ATCC 204508 / S288c) (Baker's yeast).